A 579-amino-acid polypeptide reads, in one-letter code: Effector protein HopAB3 (579 aa).

Disordered stretches follow at residues 1-140, 214-294, and 384-408; these read MAGI…TGAV, VRQQ…NQVP, and PARAQAPRPAVPVAPATVSRRPDSA. A host recognition; Pto interaction region spans residues 1-336; sequence MAGINGAGPS…LRAALERHIL (336 aa). 5 stretches are compositionally biased toward low complexity: residues 23-39, 89-101, 219-248, 266-281, and 384-402; these read ASGGAHGSSSGASSSNS, RPQESAEAAAPQA, ASAPPRTAARSSVRTPERSTVPPTSTESSS, NQRRPSSASNASASQR, and PARAQAPRPAVPVAPATVS. The E3 ubiquitin-protein ligase stretch occupies residues 337–579; that stretch reads HRRPIPMDIA…IAKYAFRIVP (243 aa).

It belongs to the HopAB family. Interacts physically with plant cell Pto. In terms of processing, auto-ubiquitinated.

The protein localises to the secreted. In terms of biological role, effector protein involved in gene-for-gene resistance in tomato plants. It is recognized by the host Pto resistance protein and elicits Pto and Prf-dependent hypersensitive response (HR) and programmed cell death (PCD), resulting in host immunity. In susceptible plants, acts as a virulence factor by suppressing PCD and HR-based plant immunity. This function requires its E3 ubiquitin ligase activity probably by recruiting E2 enzymes and transferring ubiquitin molecules to cellular proteins involved in regulation of PCD and targeting them for degradation. Enhances the development of disease symptoms and bacterial growth. This is Effector protein HopAB3 (hopAB3) from Pseudomonas syringae pv. tomato.